The chain runs to 205 residues: Small ribosomal subunit protein uS4 (205 aa).

Residues 18–46 (NIWGRPKSPVNRREYGPGQHGQRRKGKLS) form a disordered region. One can recognise an S4 RNA-binding domain in the interval 94–157 (RRLDTVVYRS…KQLAIVLEAN (64 aa)).

The protein belongs to the universal ribosomal protein uS4 family. Part of the 30S ribosomal subunit. Contacts protein S5. The interaction surface between S4 and S5 is involved in control of translational fidelity.

In terms of biological role, one of the primary rRNA binding proteins, it binds directly to 16S rRNA where it nucleates assembly of the body of the 30S subunit. Its function is as follows. With S5 and S12 plays an important role in translational accuracy. The chain is Small ribosomal subunit protein uS4 from Rhodopseudomonas palustris (strain BisB5).